A 261-amino-acid chain; its full sequence is Ribosome biogenesis protein nsa2 (261 aa).

2 stretches are compositionally biased toward basic and acidic residues: residues 1-36 and 66-82; these read MPQN…HKQS and KQHE…EKDP. Disordered regions lie at residues 1–44 and 64–97; these read MPQN…NLRG and AIKQ…SNPT. The short motif at 15 to 22 is the Nuclear localization signal element; the sequence is GKRLDTEE.

It belongs to the eukaryotic ribosomal protein eS8 family. Ribosome biogenesis protein NSA2 subfamily. As to quaternary structure, component of the pre-66S ribosomal particle. Interacts with nop7 and rrp1. Interacts with rsa4 (via WD repeats).

It is found in the nucleus. It localises to the nucleolus. Its function is as follows. Involved in the biogenesis of the 60S ribosomal subunit. May play a part in the quality control of pre-60S particles. The protein is Ribosome biogenesis protein nsa2 (rbg-52) of Neurospora crassa (strain ATCC 24698 / 74-OR23-1A / CBS 708.71 / DSM 1257 / FGSC 987).